We begin with the raw amino-acid sequence, 223 residues long: Ribosome maturation factor RimM (223 aa).

The 82-residue stretch at 142–223 folds into the PRC barrel domain; the sequence is ADEFYWVDLI…RIVVDWEADY (82 aa).

The protein belongs to the RimM family. In terms of assembly, binds ribosomal protein uS19.

It localises to the cytoplasm. Its function is as follows. An accessory protein needed during the final step in the assembly of 30S ribosomal subunit, possibly for assembly of the head region. Essential for efficient processing of 16S rRNA. May be needed both before and after RbfA during the maturation of 16S rRNA. It has affinity for free ribosomal 30S subunits but not for 70S ribosomes. This is Ribosome maturation factor RimM from Burkholderia multivorans (strain ATCC 17616 / 249).